We begin with the raw amino-acid sequence, 436 residues long: Histone acetyltransferase RTT109 (436 aa).

The Rtt109-type HAT domain occupies 2–404 (SLNDFLSSVL…LQSLTGKREH (403 aa)). Acetyl-CoA contacts are provided by residues 88–90 (ADT) and 97–101 (RVSVR). The interval 128 to 170 (RSYKKISPELISAASTPARTLRILARRLKQSGSTVLKEIESPR) is interaction with VPS75. Residues phenylalanine 192, alanine 196, 211–213 (HIL), and tryptophan 221 each bind acetyl-CoA. Catalysis depends on aspartate 288, which acts as the Proton donor/acceptor. Lysine 290 carries the N6-acetyllysine; by autocatalysis modification. An interaction with ASF1 region spans residues 419–433 (LAITMLKPRKKAKAL).

This sequence belongs to the RTT109 family. As to quaternary structure, forms a complex composed of two RTT109 subunits and one VPS75 homodimer; each RTT109 subunit interacts predominantly with VPS75 instead of interacting with the other RTT109 subunit. Interacts with VPS75; the interaction is direct. Interacts (via C-terminus) with ASF1; the interaction is direct. Interacts with histone H3/H4 heterodimers via histone H3.

The protein resides in the nucleus. The enzyme catalyses L-lysyl-[histone] + acetyl-CoA = N(6)-acetyl-L-lysyl-[histone] + CoA + H(+). It catalyses the reaction L-lysyl-[protein] + acetyl-CoA = N(6)-acetyl-L-lysyl-[protein] + CoA + H(+). Functionally, histone chaperone-dependent acetylase that modifies 'Lys-9', 'Lys-14', 'Lys-23', 'Lys-27', and 'Lys-56' on histone H3 (H3K9Ac, H3K14Ac and H3K23Ac, H3K27Ac, and H3K56Ac) to promote nucleosome assembly, genomic stability, DNA repair and transcriptional regulation during mitotic S-phase. Its residue selectivity is influenced by the acetylation status of histone H3, and also the presence of histone chaperone ASF1 that shifts selectivity to 'Lys-56' when H3K14Ac is already present. H3K56 acetylation weakens the interaction between the histone core and the surrounding DNA in the nucleosomal particle and drives chromatin disassembly. Autoacetylates. Independently of acetyltransferase activity, stimulates histone deposition by VPS75. Involved in regulation of Ty1 transposition. This Saccharomyces cerevisiae (strain ATCC 204508 / S288c) (Baker's yeast) protein is Histone acetyltransferase RTT109.